Consider the following 754-residue polypeptide: 5-methyltetrahydropteroyltriglutamate--homocysteine methyltransferase (754 aa).

5-methyltetrahydropteroyltri-L-glutamate contacts are provided by residues 17–20 and K117; that span reads RELK. L-homocysteine is bound by residues 431 to 433 and E484; that span reads IGS. L-methionine is bound by residues 431 to 433 and E484; that span reads IGS. Residues 515–516 and W561 contribute to the 5-methyltetrahydropteroyltri-L-glutamate site; that span reads RC. An L-homocysteine-binding site is contributed by D599. Position 599 (D599) interacts with L-methionine. E605 provides a ligand contact to 5-methyltetrahydropteroyltri-L-glutamate. 3 residues coordinate Zn(2+): H641, C643, and E665. H694 (proton donor) is an active-site residue. C726 serves as a coordination point for Zn(2+).

It belongs to the vitamin-B12 independent methionine synthase family. Zn(2+) serves as cofactor.

The catalysed reaction is 5-methyltetrahydropteroyltri-L-glutamate + L-homocysteine = tetrahydropteroyltri-L-glutamate + L-methionine. It functions in the pathway amino-acid biosynthesis; L-methionine biosynthesis via de novo pathway; L-methionine from L-homocysteine (MetE route): step 1/1. Functionally, catalyzes the transfer of a methyl group from 5-methyltetrahydrofolate to homocysteine resulting in methionine formation. This chain is 5-methyltetrahydropteroyltriglutamate--homocysteine methyltransferase, found in Pectobacterium atrosepticum (strain SCRI 1043 / ATCC BAA-672) (Erwinia carotovora subsp. atroseptica).